Here is a 668-residue protein sequence, read N- to C-terminus: DNA ligase (668 aa).

Residues 37–41 (DAIYD), 86–87 (SL), and Glu116 contribute to the NAD(+) site. Lys118 serves as the catalytic N6-AMP-lysine intermediate. NAD(+)-binding residues include Arg139, Glu176, Lys289, and Lys313. Cys407, Cys410, Cys425, and Cys430 together coordinate Zn(2+). The BRCT domain maps to 586–668 (AQSSALAGLT…RALIETREMP (83 aa)).

This sequence belongs to the NAD-dependent DNA ligase family. LigA subfamily. Mg(2+) is required as a cofactor. Mn(2+) serves as cofactor.

It carries out the reaction NAD(+) + (deoxyribonucleotide)n-3'-hydroxyl + 5'-phospho-(deoxyribonucleotide)m = (deoxyribonucleotide)n+m + AMP + beta-nicotinamide D-nucleotide.. DNA ligase that catalyzes the formation of phosphodiester linkages between 5'-phosphoryl and 3'-hydroxyl groups in double-stranded DNA using NAD as a coenzyme and as the energy source for the reaction. It is essential for DNA replication and repair of damaged DNA. This is DNA ligase from Gloeobacter violaceus (strain ATCC 29082 / PCC 7421).